A 367-amino-acid polypeptide reads, in one-letter code: Glutamate 5-kinase (367 aa).

ATP is bound at residue Lys10. Ser50, Asp137, and Asn149 together coordinate substrate. ATP contacts are provided by residues 169 to 170 (TD) and 211 to 217 (TGGMATK). Positions 275–353 (AGEITVDDGA…QQISEILGYE (79 aa)) constitute a PUA domain.

The protein belongs to the glutamate 5-kinase family.

Its subcellular location is the cytoplasm. It catalyses the reaction L-glutamate + ATP = L-glutamyl 5-phosphate + ADP. The protein operates within amino-acid biosynthesis; L-proline biosynthesis; L-glutamate 5-semialdehyde from L-glutamate: step 1/2. Its function is as follows. Catalyzes the transfer of a phosphate group to glutamate to form L-glutamate 5-phosphate. The protein is Glutamate 5-kinase of Yersinia enterocolitica serotype O:8 / biotype 1B (strain NCTC 13174 / 8081).